The primary structure comprises 807 residues: Microbial collagenase (807 aa).

A signal peptide spans 1-27 (MSHLLPFPRRRLALACLLASISGASFG). H434 provides a ligand contact to Zn(2+). E435 is a catalytic residue. Residue H438 participates in Zn(2+) binding. Positions 562 to 585 (EVTPENPDTDPDTPTEPSDGVTQL) are disordered.

This sequence belongs to the peptidase M9A family. Requires Zn(2+) as cofactor.

The protein resides in the secreted. The catalysed reaction is Digestion of native collagen in the triple helical region at Xaa-|-Gly bonds. With synthetic peptides, a preference is shown for Gly at P3 and P1', Pro and Ala at P2 and P2', and hydroxyproline, Ala or Arg at P3'.. Its function is as follows. Possesses gelatinolytic activity. The polypeptide is Microbial collagenase (Vibrio vulnificus (strain CMCP6)).